Reading from the N-terminus, the 177-residue chain is Probable DNA-directed RNA polymerase subunit delta (177 aa).

The region spanning 14-81 (CSMIEVVHSV…GENRWGLRSW (68 aa)) is the HTH HARE-type domain. The tract at residues 91-177 (ILPQPKPKKK…DETEEEEEEL (87 aa)) is disordered. Positions 106 to 177 (DGFDDYIEED…DETEEEEEEL (72 aa)) are enriched in acidic residues.

Belongs to the RpoE family. As to quaternary structure, RNAP is composed of a core of 2 alpha, a beta and a beta' subunits. The core is associated with a delta subunit and one of several sigma factors.

Functionally, participates in both the initiation and recycling phases of transcription. In the presence of the delta subunit, RNAP displays an increased specificity of transcription, a decreased affinity for nucleic acids, and an increased efficiency of RNA synthesis because of enhanced recycling. This is Probable DNA-directed RNA polymerase subunit delta from Bacillus cereus (strain G9842).